Reading from the N-terminus, the 544-residue chain is MTKFIFVTGGVVSSLGKGITAASLAAVLEARGVNVTMTKMDPYINVDPGTMSPFQHGEVFVTEDGAETDLDLGYYERFLRHSKMSKSNNFTSGRIYQNVLNKERRGEYLGGTVQVIPHITDEIKSKILASGEGYDVAIIEIGGTVGDIESLPFMEAVRQMQVELGRNRAMLMHLTLVPYIASAGETKTKPTQHSVKELRSIGLQPDILICRSDHHISQDNRRKIALFTNVEERAVIMCEDAQSIYQIPRTLHEQDLDDLICERFGLDLPEADLSDWDKVVEAQLNPESTVTVAMVGKYVELPDAYKSINEALLHAGITHKADVKIDYIDAERLEDDDSLLAQLHNADAILVPGGFGERGTMGKIKAITYARENNVPYLGICLGMQLAVIEYARNVLHIDANSSEFDRKTAEPIIGLITEWLDERGELQIRSDDSDLGGTMRLGAQQAELVAGSKLAQIYGANNITERHRHRYEMNNRYIEPLEQAGMTVSGYSAKQHLVESVELADHPWFVAVQFHPEFTSSPRGGHPLFNSFVKAAKNYSEAK.

Residues 1-266 (MTKFIFVTGG…DDLICERFGL (266 aa)) are amidoligase domain. Residue serine 13 participates in CTP binding. UTP is bound at residue serine 13. ATP contacts are provided by residues 14-19 (SLGKGI) and aspartate 71. 2 residues coordinate Mg(2+): aspartate 71 and glutamate 140. Residues 147-149 (DIE), 187-192 (KTKPTQ), and lysine 223 each bind CTP. UTP is bound by residues 187–192 (KTKPTQ) and lysine 223. The 253-residue stretch at 291-543 (TVAMVGKYVE…VKAAKNYSEA (253 aa)) folds into the Glutamine amidotransferase type-1 domain. Glycine 354 contributes to the L-glutamine binding site. Cysteine 381 (nucleophile; for glutamine hydrolysis) is an active-site residue. Residues 382–385 (LGMQ), glutamate 404, and arginine 471 contribute to the L-glutamine site. Residues histidine 516 and glutamate 518 contribute to the active site.

Belongs to the CTP synthase family. In terms of assembly, homotetramer.

It catalyses the reaction UTP + L-glutamine + ATP + H2O = CTP + L-glutamate + ADP + phosphate + 2 H(+). The enzyme catalyses L-glutamine + H2O = L-glutamate + NH4(+). The catalysed reaction is UTP + NH4(+) + ATP = CTP + ADP + phosphate + 2 H(+). Its pathway is pyrimidine metabolism; CTP biosynthesis via de novo pathway; CTP from UDP: step 2/2. With respect to regulation, allosterically activated by GTP, when glutamine is the substrate; GTP has no effect on the reaction when ammonia is the substrate. The allosteric effector GTP functions by stabilizing the protein conformation that binds the tetrahedral intermediate(s) formed during glutamine hydrolysis. Inhibited by the product CTP, via allosteric rather than competitive inhibition. Its function is as follows. Catalyzes the ATP-dependent amination of UTP to CTP with either L-glutamine or ammonia as the source of nitrogen. Regulates intracellular CTP levels through interactions with the four ribonucleotide triphosphates. In Psychrobacter cryohalolentis (strain ATCC BAA-1226 / DSM 17306 / VKM B-2378 / K5), this protein is CTP synthase.